Here is a 440-residue protein sequence, read N- to C-terminus: Glutamyl-tRNA reductase (440 aa).

Substrate-binding positions include threonine 55–arginine 58, serine 115, glutamate 120–glutamine 122, and glutamine 126. Residue cysteine 56 is the Nucleophile of the active site. Glycine 199–glycine 204 contacts NADP(+).

It belongs to the glutamyl-tRNA reductase family. Homodimer.

It catalyses the reaction (S)-4-amino-5-oxopentanoate + tRNA(Glu) + NADP(+) = L-glutamyl-tRNA(Glu) + NADPH + H(+). Its pathway is porphyrin-containing compound metabolism; protoporphyrin-IX biosynthesis; 5-aminolevulinate from L-glutamyl-tRNA(Glu): step 1/2. In terms of biological role, catalyzes the NADPH-dependent reduction of glutamyl-tRNA(Glu) to glutamate 1-semialdehyde (GSA). The polypeptide is Glutamyl-tRNA reductase (Helicobacter hepaticus (strain ATCC 51449 / 3B1)).